Consider the following 474-residue polypeptide: uncharacterized protein (474 aa).

A signal peptide spans 1–23 (MLRRYLTLSFSSLLLLALLFLTG). The N-palmitoyl cysteine moiety is linked to residue cysteine 24. Cysteine 24 carries S-diacylglycerol cysteine lipidation.

It belongs to the MG067/MG068/MG395 family.

The protein resides in the cell membrane. This is an uncharacterized protein from Mycoplasma genitalium (strain ATCC 33530 / DSM 19775 / NCTC 10195 / G37) (Mycoplasmoides genitalium).